An 840-amino-acid chain; its full sequence is Homeobox-leucine zipper protein HOX9 (840 aa).

Disordered regions lie at residues 1–26 (MAAA…AGMD) and 135–160 (NPSL…DASN). Residues 12–21 (GSDGGGGGYD) show a composition bias toward gly residues. The homeobox DNA-binding region spans 26 to 89 (DSGKYVRYTP…NRRCRDKQRK (64 aa)). Residues 86–135 (KQRKEASRLQAVNRKLTAMNKLLMEENERLQKQVSQLVHENAYMKQQLQN) are a coiled coil. The START domain maps to 157–385 (DASNPSGLLT…IAQETSGEVV (229 aa)).

It belongs to the HD-ZIP homeobox family. Class III subfamily. In terms of tissue distribution, expressed in seedlings, roots, stems, leaf sheaths and blades and panicles.

The protein localises to the nucleus. Functionally, probable transcription factor. This chain is Homeobox-leucine zipper protein HOX9 (HOX9), found in Oryza sativa subsp. japonica (Rice).